The following is a 275-amino-acid chain: Elongation factor Ts (275 aa).

Residues 76 to 79 (TDFV) form an involved in Mg(2+) ion dislocation from EF-Tu region.

This sequence belongs to the EF-Ts family.

Its subcellular location is the cytoplasm. Associates with the EF-Tu.GDP complex and induces the exchange of GDP to GTP. It remains bound to the aminoacyl-tRNA.EF-Tu.GTP complex up to the GTP hydrolysis stage on the ribosome. This Corynebacterium glutamicum (strain R) protein is Elongation factor Ts.